A 206-amino-acid polypeptide reads, in one-letter code: Ribosomal RNA large subunit methyltransferase E (206 aa).

5 residues coordinate S-adenosyl-L-methionine: Gly61, Trp63, Asp81, Asp97, and Asp122. Residue Lys162 is the Proton acceptor of the active site.

It belongs to the class I-like SAM-binding methyltransferase superfamily. RNA methyltransferase RlmE family.

It is found in the cytoplasm. The enzyme catalyses uridine(2552) in 23S rRNA + S-adenosyl-L-methionine = 2'-O-methyluridine(2552) in 23S rRNA + S-adenosyl-L-homocysteine + H(+). In terms of biological role, specifically methylates the uridine in position 2552 of 23S rRNA at the 2'-O position of the ribose in the fully assembled 50S ribosomal subunit. The chain is Ribosomal RNA large subunit methyltransferase E from Neisseria gonorrhoeae (strain ATCC 700825 / FA 1090).